A 278-amino-acid polypeptide reads, in one-letter code: MCSDFRRAESGTELLARLEGRSSLKELEPNLFADEDSPVHGDIFEFHGPEGTGKTEMLYHLTARCILPKSEGGLQIEVLFIDTDYHFDMLRLVTVLEHRLSQSSEEAMKLCLARLFLAYCSSSMQLLLTLHSLEALLCSRPSLCLLIVDSLSSFYWIDRVSGGESVALQESTLQKCSQLLERLVTEYRLLLFATTQSLMQKGSDSADGPSSSKHPCDGDMGYRAYLCKAWQRVVKHRVIFSRDDEAKSSRFSLVSRHLKSNSLKKHSFMVRESGVEFC.

Position 10 is a phosphoserine (S10).

This sequence belongs to the RecA family. RAD51 subfamily. In terms of assembly, interacts with RAD51D. Part of the BCDX2 complex consisting of RAD51B, RAD51C, RAD51D and XRCC2; the complex has a ring-like structure arranged into a flat disk around a central channel. In the absence of DNA, the BCDX2 subcomplex XRCC2:RAD51D formed a multimeric ring structure; in the presence of single-stranded DNA it formed a filamentous structure with the ssDNA. As to expression, expressed at low level in somatic tissues and at high level in testis.

It is found in the nucleus. Functionally, involved in the homologous recombination repair (HRR) pathway of double-stranded DNA, thought to repair chromosomal fragmentation, translocations and deletions. Part of the RAD51 paralog protein complex BCDX2 which acts in the BRCA1-BRCA2-dependent HR pathway. Upon DNA damage, BCDX2 acts downstream of BRCA2 recruitment and upstream of RAD51 recruitment. BCDX2 binds predominantly to the intersection of the four duplex arms of the Holliday junction and to junction of replication forks. The BCDX2 complex was originally reported to bind single-stranded DNA, single-stranded gaps in duplex DNA and specifically to nicks in duplex DNA. The polypeptide is DNA repair protein XRCC2 (Xrcc2) (Mus musculus (Mouse)).